A 359-amino-acid polypeptide reads, in one-letter code: Fructose-bisphosphate aldolase (359 aa).

Ser50 provides a ligand contact to D-glyceraldehyde 3-phosphate. Asp83 serves as the catalytic Proton donor. 4 residues coordinate Zn(2+): His84, Asp105, Glu142, and His198. Residue Gly199 coordinates dihydroxyacetone phosphate. Residue His232 coordinates Zn(2+). Dihydroxyacetone phosphate contacts are provided by residues Gly233–Ser235 and Asn275–Thr278.

This sequence belongs to the class II fructose-bisphosphate aldolase family. Zn(2+) serves as cofactor.

It carries out the reaction beta-D-fructose 1,6-bisphosphate = D-glyceraldehyde 3-phosphate + dihydroxyacetone phosphate. It participates in carbohydrate degradation; glycolysis; D-glyceraldehyde 3-phosphate and glycerone phosphate from D-glucose: step 4/4. In terms of biological role, catalyzes the aldol condensation of dihydroxyacetone phosphate (DHAP or glycerone-phosphate) with glyceraldehyde 3-phosphate (G3P) to form fructose 1,6-bisphosphate (FBP) in gluconeogenesis and the reverse reaction in glycolysis. In Nostoc commune, this protein is Fructose-bisphosphate aldolase (fba).